A 521-amino-acid chain; its full sequence is Protein DETOXIFICATION 44, chloroplastic (521 aa).

The transit peptide at 1 to 31 (MAAVATSFCFSPHRSPSRFGNPNSSIRRTIV) directs the protein to the chloroplast. Positions 12 to 73 (PHRSPSRFGN…DHDHKPDPGI (62 aa)) are disordered. Polar residues-rich tracts occupy residues 18-27 (RFGNPNSSIR) and 42-61 (AVST…TSQN). 12 helical membrane passes run 80–100 (IMSI…TSLV), 103–123 (AFVG…VSVF), 167–187 (VSTS…ALSL), 213–235 (RLRA…FRGF), 242–262 (LYAV…LIFV), 268–288 (SGAA…LLWK), 314–334 (LLIG…SLAA), 345–365 (QIVL…AIAA), 385–405 (LFGV…VLFI), 423–443 (IALS…LAFV), 454–474 (FGFA…FMLV), and 481–503 (LAGI…AWRL).

The protein belongs to the multi antimicrobial extrusion (MATE) (TC 2.A.66.1) family. In terms of tissue distribution, expressed in shoots.

It is found in the plastid. It localises to the chloroplast membrane. The sequence is that of Protein DETOXIFICATION 44, chloroplastic from Arabidopsis thaliana (Mouse-ear cress).